Reading from the N-terminus, the 493-residue chain is MLAATVLTLALLGNVHACSKGTSHKAGIVCRITKPALLVLNQETAKVIQSAFQRANYPNITGEKAMMLLGQVKYGLHNIQISHLSIASSRVELVEAKSIDVSIQNVSVVFKGTLKYGYTTAWGLGIDQSVDFEIDSAIDLQINTQLTCDSGRVRTDAPDCYLSFHKLLLHLQGEREPGWIKQLFTNFISFTLKLVLKGQICKEINIISNIMADFVQTRAASILSDGDIGVDISLTGDPIITASYLESHHKGYFIYKNVSEDLPLPTFSPALLGDSRMLYFWFSEQVFHSLAKVAFQDGRLMLSLMGDEFKAVLETWGFNTNQEIFQEVVGGFPSQAQVTVHCLKMPRISCQNKGVVVNSSVMVKFLFPRPDQQHSVAYTFEEDIMTTVQASYSKKKLFLSLLDFQITPKTVSNLTESSSESVQSFLQSMITTVGIPEVMSRLEAVFTALMNSKGLSLFDIINPEIITRDGFLLLQMDFGFPEHLLVDFLQSLS.

The first 17 residues, 1 to 17 (MLAATVLTLALLGNVHA), serve as a signal peptide directing secretion. Residues Asn59 and Asn105 are each glycosylated (N-linked (GlcNAc...) asparagine). Cys160 and Cys201 are disulfide-bonded. Residues Asn257, Asn358, and Asn413 are each glycosylated (N-linked (GlcNAc...) asparagine).

It belongs to the BPI/LBP/Plunc superfamily. BPI/LBP family. Probably primarily expressed in liver and adipose tissues. Detected in adrenal gland, mesenteric fat, spleen and aorta.

It localises to the secreted. The catalysed reaction is cholesteryl (9Z-octadecenoate)(in) = cholesteryl (9Z-octadecenoate)(out). It catalyses the reaction 1,2,3-tri-(9Z-octadecenoyl)-glycerol(in) = 1,2,3-tri-(9Z-octadecenoyl)-glycerol(out). The enzyme catalyses cholesteryl (9Z,12Z)-octadecadienoate(in) = cholesteryl (9Z,12Z)-octadecadienoate(out). Functionally, involved in the transfer of neutral lipids, including cholesteryl ester and triglyceride, among lipoprotein particles. Allows the net movement of cholesteryl ester from high density lipoproteins/HDL to triglyceride-rich very low density lipoproteins/VLDL, and the equimolar transport of triglyceride from VLDL to HDL. Regulates the reverse cholesterol transport, by which excess cholesterol is removed from peripheral tissues and returned to the liver for elimination. In Macaca fascicularis (Crab-eating macaque), this protein is Cholesteryl ester transfer protein.